Consider the following 430-residue polypeptide: Serine--tRNA ligase (430 aa).

Residue threonine 231–glutamate 233 coordinates L-serine. Position 262 to 264 (arginine 262 to glutamate 264) interacts with ATP. Residue glutamate 285 participates in L-serine binding. Glutamate 349–serine 352 is a binding site for ATP. Serine 385 is a binding site for L-serine.

The protein belongs to the class-II aminoacyl-tRNA synthetase family. Type-1 seryl-tRNA synthetase subfamily. Homodimer. The tRNA molecule binds across the dimer.

It localises to the cytoplasm. It carries out the reaction tRNA(Ser) + L-serine + ATP = L-seryl-tRNA(Ser) + AMP + diphosphate + H(+). It catalyses the reaction tRNA(Sec) + L-serine + ATP = L-seryl-tRNA(Sec) + AMP + diphosphate + H(+). Its pathway is aminoacyl-tRNA biosynthesis; selenocysteinyl-tRNA(Sec) biosynthesis; L-seryl-tRNA(Sec) from L-serine and tRNA(Sec): step 1/1. In terms of biological role, catalyzes the attachment of serine to tRNA(Ser). Is also able to aminoacylate tRNA(Sec) with serine, to form the misacylated tRNA L-seryl-tRNA(Sec), which will be further converted into selenocysteinyl-tRNA(Sec). The polypeptide is Serine--tRNA ligase (Jannaschia sp. (strain CCS1)).